The primary structure comprises 83 residues: Apolipoprotein C-I, acidic form (83 aa).

Positions 1–26 (MRLFLSLPVLVVVLSIVLEGPAPAQG) are cleaved as a signal peptide.

This sequence belongs to the apolipoprotein C1 family.

The protein localises to the secreted. This is Apolipoprotein C-I, acidic form (APOC1A) from Pan paniscus (Pygmy chimpanzee).